Reading from the N-terminus, the 327-residue chain is Phenylalanine--tRNA ligase alpha subunit (327 aa).

Mg(2+) is bound at residue Glu-252.

This sequence belongs to the class-II aminoacyl-tRNA synthetase family. Phe-tRNA synthetase alpha subunit type 1 subfamily. As to quaternary structure, tetramer of two alpha and two beta subunits. Requires Mg(2+) as cofactor.

It is found in the cytoplasm. It carries out the reaction tRNA(Phe) + L-phenylalanine + ATP = L-phenylalanyl-tRNA(Phe) + AMP + diphosphate + H(+). The polypeptide is Phenylalanine--tRNA ligase alpha subunit (Erwinia tasmaniensis (strain DSM 17950 / CFBP 7177 / CIP 109463 / NCPPB 4357 / Et1/99)).